Reading from the N-terminus, the 351-residue chain is Quinolinate phosphoribosyltransferase [decarboxylating] 2a, mitochondrial (351 aa).

Substrate contacts are provided by residues R142, 173–175, R197, K207, E240, D267, 299–301, and 320–322; these read TRK, SGN, and SGA.

This sequence belongs to the NadC/ModD family. Expressed in roots and flowers.

The protein localises to the mitochondrion. It carries out the reaction nicotinate beta-D-ribonucleotide + CO2 + diphosphate = quinolinate + 5-phospho-alpha-D-ribose 1-diphosphate + 2 H(+). It functions in the pathway alkaloid biosynthesis; nicotine biosynthesis. The protein operates within cofactor biosynthesis; NAD(+) biosynthesis; nicotinate D-ribonucleotide from quinolinate: step 1/1. In terms of biological role, involved in the biosynthesis of pyridine alkaloid natural products, leading mainly to the production of anabasine, anatabine, nicotine and nornicotine, effective deterrents against herbivores with antiparasitic and pesticide properties (neurotoxins); nornicotine serves as the precursor in the synthesis of the carcinogen compound N'-nitrosonornicotine (NNN). Involved in the catabolism of quinolinic acid (QA). This Nicotiana tabacum (Common tobacco) protein is Quinolinate phosphoribosyltransferase [decarboxylating] 2a, mitochondrial.